The primary structure comprises 417 residues: Tyrosine--tRNA ligase (417 aa).

Tyr-40 provides a ligand contact to L-tyrosine. The 'HIGH' region motif lies at 45–54; the sequence is ATAASLHVGH. L-tyrosine is bound by residues Tyr-177 and Gln-181. Residues 237-241 carry the 'KMSKS' region motif; that stretch reads KMGKS. Lys-240 lines the ATP pocket. The S4 RNA-binding domain occupies 351 to 414; sequence ISVVQLITRS…AGRKRHALIK (64 aa).

Belongs to the class-I aminoacyl-tRNA synthetase family. TyrS type 1 subfamily. Homodimer.

It localises to the cytoplasm. The catalysed reaction is tRNA(Tyr) + L-tyrosine + ATP = L-tyrosyl-tRNA(Tyr) + AMP + diphosphate + H(+). Functionally, catalyzes the attachment of tyrosine to tRNA(Tyr) in a two-step reaction: tyrosine is first activated by ATP to form Tyr-AMP and then transferred to the acceptor end of tRNA(Tyr). The sequence is that of Tyrosine--tRNA ligase from Dinoroseobacter shibae (strain DSM 16493 / NCIMB 14021 / DFL 12).